The sequence spans 49 residues: Small integral membrane protein 27 (49 aa).

Residues 11-31 (WTYSLLLLAIVLLSWGFVIYA) traverse the membrane as a helical segment.

Its subcellular location is the membrane. This is Small integral membrane protein 27 from Mus musculus (Mouse).